Reading from the N-terminus, the 217-residue chain is Insulin-like growth factor 2.L (217 aa).

An N-terminal signal peptide occupies residues 1–56 (MEQLSCKHRSSSMEAEAQLCRQTESRSTQLPRMSVMRHLFLLSITFLVYTLDSAKA). A b region spans residues 57-83 (YRPTETLCGGELVDTLQFVCGDRGFYF). Disulfide bonds link C64-C103, C76-C116, and C102-C107. The c stretch occupies residues 84-96 (STNNGRSNRRSNR). The interval 97–117 (GIVEECCFRSCDLELLETYCA) is a. The tract at residues 118–123 (KPSKNE) is d. Residues 124–217 (RDVSTAPATA…LQQTSEPSHN (94 aa)) constitute a propeptide, e peptide.

The protein belongs to the insulin family.

It is found in the secreted. Its function is as follows. The insulin-like growth factors, isolated from plasma, are structurally and functionally related to insulin but have a much higher growth-promoting activity. Promotes anterior neural development. Acts as a ligand for integrin which is required for IGF2 signaling. The protein is Insulin-like growth factor 2.L of Xenopus laevis (African clawed frog).